The chain runs to 490 residues: Bifunctional IPC transferase and DIPP synthase (490 aa).

Residues 72-290 (LMKAVILAAG…RANRALVSAA (219 aa)) form a mobA-like NTP transferase region. Residues 78-80 (LAA), K91, D144, and E180 contribute to the CTP site. E180 contacts Mg(2+). The segment at 291-490 (VKGSGDGFIS…VTLLAVLVSK (200 aa)) is CDP-alcohol phosphatidyltransferases. 4 consecutive transmembrane segments (helical) span residues 329–349 (FLVG…AGLL), 389–409 (FLAI…FAIF), 447–467 (IFLI…IFWM), and 468–488 (FLFV…AVLV).

The protein in the N-terminal section; belongs to the MobA family. This sequence in the C-terminal section; belongs to the CDP-alcohol phosphatidyltransferase class-I family. As to quaternary structure, forms a mixture of monomers and dimers in solution, with prevalence of the monomeric form. Mg(2+) is required as a cofactor.

It localises to the membrane. It catalyses the reaction 1D-myo-inositol 3-phosphate + CTP + H(+) = CDP-1L-myo-inositol + diphosphate. The enzyme catalyses CDP-1L-myo-inositol + 1D-myo-inositol 3-phosphate = bis(1L-myo-inositol) 3,1'-phosphate 1-phosphate + CMP + H(+). Its function is as follows. Involved in biosynthesis of di-myo-inositol phosphate (DIP), a widespread organic solute in microorganisms adapted to hot environments. Catalyzes the condensation of CTP and L-myo-inositol-1-phosphate into CDP-L-myo-inositol, as well as the biosynthesis of di-myo-inositol-1,3'-phosphate-1'-phosphate (DIPP) from CDP-L-myo-inositol and L-myo-inositol-1-phosphate. The cytidylyltransferase is absolutely specific for CTP and L-myo-inositol-1-P. The DIPP synthase uses only L-myoinositol-1-phosphate as an alcohol acceptor, but CDP-glycerol, as well as CDP-L-myo-inositol and CDP-D-myoinositol, are recognized as alcohol donors. This chain is Bifunctional IPC transferase and DIPP synthase, found in Archaeoglobus fulgidus (strain ATCC 49558 / DSM 4304 / JCM 9628 / NBRC 100126 / VC-16).